A 734-amino-acid polypeptide reads, in one-letter code: Mechanosensitive ion channel protein 10 (734 aa).

Disordered stretches follow at residues 1–75 (MAEQ…LTQR) and 115–136 (SFSR…APVT). Basic and acidic residues predominate over residues 24–39 (EASRRSKEMASPESEK). S34 carries the phosphoserine modification. Polar residues-rich tracts occupy residues 65-75 (PNQNNVGLTQR) and 117-129 (SRAS…NRSV). Phosphoserine occurs at positions 128 and 131. Helical transmembrane passes span 164–184 (ISTL…ALVA), 196–216 (FWGL…SGML), 249–269 (SVQV…LFNH), 288–308 (LISI…LKIL), 516–536 (LVTA…LEVA), and 551–571 (LAFI…FVFV).

Belongs to the MscS (TC 1.A.23) family. In terms of tissue distribution, detected in the root tip and throughout the vasculature of the root and leaf.

It localises to the cell membrane. Its function is as follows. Mechanosensitive channel that opens in response to stretch forces in the membrane lipid bilayer. The sequence is that of Mechanosensitive ion channel protein 10 (MSL10) from Arabidopsis thaliana (Mouse-ear cress).